We begin with the raw amino-acid sequence, 445 residues long: N-succinylarginine dihydrolase (445 aa).

Substrate contacts are provided by residues 19–28 (AGLSFGNVAS), asparagine 110, and 137–138 (HR). The active site involves glutamate 174. Arginine 214 is a substrate binding site. Histidine 250 is an active-site residue. Residues aspartate 252 and asparagine 363 each contribute to the substrate site. Catalysis depends on cysteine 369, which acts as the Nucleophile.

This sequence belongs to the succinylarginine dihydrolase family. In terms of assembly, homodimer.

It catalyses the reaction N(2)-succinyl-L-arginine + 2 H2O + 2 H(+) = N(2)-succinyl-L-ornithine + 2 NH4(+) + CO2. It participates in amino-acid degradation; L-arginine degradation via AST pathway; L-glutamate and succinate from L-arginine: step 2/5. Its function is as follows. Catalyzes the hydrolysis of N(2)-succinylarginine into N(2)-succinylornithine, ammonia and CO(2). The polypeptide is N-succinylarginine dihydrolase (Shewanella sediminis (strain HAW-EB3)).